The sequence spans 365 residues: Aminomethyltransferase (365 aa).

It belongs to the GcvT family. In terms of assembly, the glycine cleavage system is composed of four proteins: P, T, L and H.

The catalysed reaction is N(6)-[(R)-S(8)-aminomethyldihydrolipoyl]-L-lysyl-[protein] + (6S)-5,6,7,8-tetrahydrofolate = N(6)-[(R)-dihydrolipoyl]-L-lysyl-[protein] + (6R)-5,10-methylene-5,6,7,8-tetrahydrofolate + NH4(+). Its function is as follows. The glycine cleavage system catalyzes the degradation of glycine. The chain is Aminomethyltransferase from Pelodictyon phaeoclathratiforme (strain DSM 5477 / BU-1).